The sequence spans 454 residues: Protoheme IX farnesyltransferase 1 (454 aa).

A unknown region spans residues 1–186 (MRTTGFSGLL…AYFELTKPRL (186 aa)). 4 helical membrane-spanning segments follow: residues 9-29 (LLSATVVGVYVLVVVGATAAL), 59-79 (GVAAVVGLLVIATAVVGWSET), 87-107 (LALALALYPAQVVLGALVATG), and 113-133 (LHLFVAMAIFAVLVVGLAWHL). The disordered stretch occupies residues 137-164 (TGSDDAPESPPELAPPVDEEPAATEQPA). Helical transmembrane passes span 186–206 (LMWLLCLVAGAGMVIAGTPTV), 209–229 (VVFTLGGGVLAIGASGTFNHV), 251–271 (VPVANALAFGGLLAVASLWAF), 276–296 (LLAAALGLAAIAFYSVVYTLI), 300–320 (NTVQNTVIGGAAGALPALIGY), 321–341 (AAVTGTIGIGGLVLAAVIFLW), 377–397 (HIVFYLGATLLGAGALAAVTD), 398–418 (LGWLYAATAVLAAGVFLWAVV), and 433–453 (FHASNAYLGLVLVAILIDSLA). The protoheme IX prenyltransferase stretch occupies residues 187-451 (MWLLCLVAGA…LVLVAILIDS (265 aa)).

This sequence in the C-terminal section; belongs to the UbiA prenyltransferase family. Protoheme IX farnesyltransferase subfamily.

Its subcellular location is the cell membrane. The catalysed reaction is heme b + (2E,6E)-farnesyl diphosphate + H2O = Fe(II)-heme o + diphosphate. The protein operates within porphyrin-containing compound metabolism; heme O biosynthesis; heme O from protoheme: step 1/1. In terms of biological role, converts heme B (protoheme IX) to heme O by substitution of the vinyl group on carbon 2 of heme B porphyrin ring with a hydroxyethyl farnesyl side group. This chain is Protoheme IX farnesyltransferase 1 (ctaB1), found in Natronomonas pharaonis (strain ATCC 35678 / DSM 2160 / CIP 103997 / JCM 8858 / NBRC 14720 / NCIMB 2260 / Gabara) (Halobacterium pharaonis).